The primary structure comprises 57 residues: Preprotein translocase subunit SecG (57 aa).

Residues 1 to 33 (MPSSKKKKENVPVMSMAGLIRYYEEEHEKYKVD) lie on the Cytoplasmic side of the membrane. Residues 34–55 (PIYVIIASIVLVAVVVAVTKII) traverse the membrane as a helical segment. Residues 56-57 (PP) are Extracellular-facing.

The protein belongs to the SEC61-beta family. As to quaternary structure, component of the protein translocase complex. Heterotrimer consisting of alpha (SecY), beta (SecG) and gamma (SecE) subunits. Can form oligomers of the heterotrimer.

Its subcellular location is the cell membrane. In terms of biological role, involved in protein export. The function of the beta subunit is unknown, but it may be involved in stabilization of the trimeric complex. The chain is Preprotein translocase subunit SecG from Metallosphaera sedula (strain ATCC 51363 / DSM 5348 / JCM 9185 / NBRC 15509 / TH2).